We begin with the raw amino-acid sequence, 85 residues long: Putative defensin-like protein 142 (85 aa).

The signal sequence occupies residues 1 to 24 (MKKSFLFTFTVLTIFTILVIGVAP). 4 cysteine pairs are disulfide-bonded: cysteine 30/cysteine 78, cysteine 41/cysteine 63, cysteine 46/cysteine 73, and cysteine 50/cysteine 75.

This sequence belongs to the DEFL family.

It is found in the secreted. The protein is Putative defensin-like protein 142 (LCR34) of Arabidopsis thaliana (Mouse-ear cress).